The primary structure comprises 312 residues: Epoxyqueuosine reductase (312 aa).

The active-site Proton donor is the Asp-132. A 4Fe-4S ferredoxin-type 1 domain is found at 174–206 (EVLEADKPSKPICGECEKCIEACPTKAIEEPFI). 8 residues coordinate [4Fe-4S] cluster: Cys-186, Cys-189, Cys-192, Cys-196, Cys-212, Cys-240, Cys-243, and Cys-247. Positions 226–257 (PENIINKMGNWIAGCDICQDVCPWNQKHIPST) constitute a 4Fe-4S ferredoxin-type 2 domain.

It belongs to the QueG family. In terms of assembly, monomer. The cofactor is cob(II)alamin. It depends on [4Fe-4S] cluster as a cofactor.

It localises to the cytoplasm. It carries out the reaction epoxyqueuosine(34) in tRNA + AH2 = queuosine(34) in tRNA + A + H2O. It functions in the pathway tRNA modification; tRNA-queuosine biosynthesis. Its function is as follows. Catalyzes the conversion of epoxyqueuosine (oQ) to queuosine (Q), which is a hypermodified base found in the wobble positions of tRNA(Asp), tRNA(Asn), tRNA(His) and tRNA(Tyr). The chain is Epoxyqueuosine reductase from Prochlorococcus marinus (strain NATL2A).